Reading from the N-terminus, the 91-residue chain is Small ribosomal subunit protein bS20 (91 aa).

Over residues Met1–Asn18 the composition is skewed to basic and acidic residues. The interval Met1 to Lys26 is disordered.

It belongs to the bacterial ribosomal protein bS20 family.

Functionally, binds directly to 16S ribosomal RNA. This is Small ribosomal subunit protein bS20 from Pelodictyon phaeoclathratiforme (strain DSM 5477 / BU-1).